A 90-amino-acid chain; its full sequence is Small ribosomal subunit protein uS15c (90 aa).

It belongs to the universal ribosomal protein uS15 family. In terms of assembly, part of the 30S ribosomal subunit.

The protein resides in the plastid. Its subcellular location is the chloroplast. The chain is Small ribosomal subunit protein uS15c (rps15) from Daucus carota (Wild carrot).